The following is a 767-amino-acid chain: DNA topoisomerase 1 (767 aa).

Residues 1-23 (MSGDHLHNDSQIEADFRLNDSHK) show a composition bias toward basic and acidic residues. Residues 1–200 (MSGDHLHNDS…DNKKKKAKKE (200 aa)) are disordered. The residue at position 2 (Ser-2) is an N-acetylserine. Phosphoserine occurs at positions 2 and 10. Positions 24-39 (HKDKHKDREHRHKEHK) are enriched in basic residues. The segment covering 40 to 110 (KDKDKDREKS…DAKIKKEKEN (71 aa)) has biased composition (basic and acidic residues). Ser-59 bears the Phosphoserine mark. A Glycyl lysine isopeptide (Lys-Gly) (interchain with G-Cter in SUMO2) cross-link involves residue Lys-103. A Glycyl lysine isopeptide (Lys-Gly) (interchain with G-Cter in SUMO); alternate cross-link involves residue Lys-105. Lys-105 is covalently cross-linked (Glycyl lysine isopeptide (Lys-Gly) (interchain with G-Cter in SUMO2); alternate). Ser-114 bears the Phosphoserine mark. Lys-119 participates in a covalent cross-link: Glycyl lysine isopeptide (Lys-Gly) (interchain with G-Cter in SUMO); alternate. Lys-119 is covalently cross-linked (Glycyl lysine isopeptide (Lys-Gly) (interchain with G-Cter in SUMO2); alternate). Residue Lys-119 forms a Glycyl lysine isopeptide (Lys-Gly) (interchain with G-Cter in SUMO1); alternate linkage. Residues 131-168 (PKEDIKPLKRPRDEDDADYKPKKIKTEDIKKEKKRKLE) show a composition bias toward basic and acidic residues. Glycyl lysine isopeptide (Lys-Gly) (interchain with G-Cter in SUMO2) cross-links involve residues Lys-136 and Lys-150. Lys-155 participates in a covalent cross-link: Glycyl lysine isopeptide (Lys-Gly) (interchain with G-Cter in SUMO); alternate. Residue Lys-155 forms a Glycyl lysine isopeptide (Lys-Gly) (interchain with G-Cter in SUMO2); alternate linkage. Glycyl lysine isopeptide (Lys-Gly) (interchain with G-Cter in SUMO2) cross-links involve residues Lys-160 and Lys-166. Lys-174 participates in a covalent cross-link: Glycyl lysine isopeptide (Lys-Gly) (interchain with G-Cter in SUMO2); alternate. The residue at position 174 (Lys-174) is an N6-acetyllysine; alternate. Residues 181-200 (KDKDKKVAEPDNKKKKAKKE) show a composition bias toward basic and acidic residues. A Glycyl lysine isopeptide (Lys-Gly) (interchain with G-Cter in SUMO2) cross-link involves residue Lys-206. Lys-282 carries the post-translational modification N6-acetyllysine. Residue Lys-338 forms a Glycyl lysine isopeptide (Lys-Gly) (interchain with G-Cter in SUMO2) linkage. Interaction with DNA regions lie at residues 427 to 428 (KY) and 490 to 495 (RAGNEK). One can recognise a Topo IB-type catalytic domain in the interval 434-767 (SSRIKGEKDW…IDMTDEDYEF (334 aa)). Ser-508 carries the post-translational modification Phosphoserine; by CK2. Lys-551 participates in a covalent cross-link: Glycyl lysine isopeptide (Lys-Gly) (interchain with G-Cter in SUMO2). An interaction with DNA region spans residues 587–589 (TAK). Glycyl lysine isopeptide (Lys-Gly) (interchain with G-Cter in SUMO2) cross-links involve residues Lys-644, Lys-702, and Lys-714. The active-site O-(3'-phospho-DNA)-tyrosine intermediate is the Tyr-725.

The protein belongs to the type IB topoisomerase family. In terms of assembly, monomer. Interacts with ERCC6. Interacts with TPRN; TPRN interacts with a number of DNA damage response proteins, is recruited to sites of DNA damage and may play a role in DNA damage repair. Sumoylated. Lys-119 is the main site of sumoylation. Sumoylation plays a role in partitioning TOP1 between nucleoli and nucleoplasm. Levels are dramatically increased on camptothecin (CPT) treatment. Post-translationally, phosphorylation at Ser-508 by CK2 increases binding to supercoiled DNA and sensitivity to camptothecin.

It is found in the nucleus. Its subcellular location is the nucleolus. The protein localises to the nucleoplasm. It carries out the reaction ATP-independent breakage of single-stranded DNA, followed by passage and rejoining.. In terms of biological role, releases the supercoiling and torsional tension of DNA introduced during the DNA replication and transcription by transiently cleaving and rejoining one strand of the DNA duplex. Introduces a single-strand break via transesterification at a target site in duplex DNA. The scissile phosphodiester is attacked by the catalytic tyrosine of the enzyme, resulting in the formation of a DNA-(3'-phosphotyrosyl)-enzyme intermediate and the expulsion of a 5'-OH DNA strand. The free DNA strand then rotates around the intact phosphodiester bond on the opposing strand, thus removing DNA supercoils. Finally, in the religation step, the DNA 5'-OH attacks the covalent intermediate to expel the active-site tyrosine and restore the DNA phosphodiester backbone. Regulates the alternative splicing of tissue factor (F3) pre-mRNA in endothelial cells. Involved in the circadian transcription of the core circadian clock component BMAL1 by altering the chromatin structure around the ROR response elements (ROREs) on the BMAL1 promoter. The protein is DNA topoisomerase 1 (Top1) of Rattus norvegicus (Rat).